Consider the following 148-residue polypeptide: Small ribosomal subunit protein uS15 (148 aa).

The disordered stretch occupies residues 1–23 (MRKSKEKGRSGSTRPPQLKKPEW).

This sequence belongs to the universal ribosomal protein uS15 family. In terms of assembly, part of the 30S ribosomal subunit.

The protein is Small ribosomal subunit protein uS15 of Thermofilum pendens (strain DSM 2475 / Hrk 5).